A 62-amino-acid polypeptide reads, in one-letter code: LTCVTDKSFGGVNTEECAAGQKICFKNWKKMGPKLYDVKRGCTATCPKADDDGCVKCCNTDK.

Disulfide bonds link Cys3-Cys24, Cys17-Cys42, and Cys46-Cys57.

This sequence belongs to the three-finger toxin family. Short-chain subfamily. Aminergic toxin sub-subfamily. In terms of assembly, homodimer; disulfide-linked. Expressed by the venom gland.

It is found in the secreted. This protein shows a synergetic toxic effect in that it enhances the toxicity of other toxins. The protein is Synergistic-type venom protein S2C4 of Dendroaspis jamesoni kaimosae (Eastern Jameson's mamba).